A 512-amino-acid chain; its full sequence is Capsid scaffolding protein (512 aa).

Catalysis depends on charge relay system residues H47, S115, and H131. The tract at residues 264–282 (DLISTICSTTHTTHHDLVR) is interaction with pAP. The tract at residues 376–407 (RGSQKRCAPTDSDDEMSFPGDPDYTTKKKKRY) is disordered. The Nuclear localization signal signature appears at 402 to 408 (KKKKRYR). The tract at residues 492–512 (DQSLLSLNKKLFVEALNKMDN) is interaction with major capsid protein.

Belongs to the herpesviridae capsid scaffolding protein family. In terms of assembly, homomultimer. Interacts with major capsid protein. As to quaternary structure, exists in a monomer-dimer equilibrium with the dimer being the active species. Post-translationally, capsid scaffolding protein is cleaved by assemblin after formation of the spherical procapsid. As a result, the capsid obtains its mature, icosahedral shape. Cleavages occur at two or more sites: release (R-site) and maturation (M-site).

Its subcellular location is the host cytoplasm. The protein resides in the host nucleus. The enzyme catalyses Cleaves -Ala-|-Ser- and -Ala-|-Ala- bonds in the scaffold protein.. Functionally, acts as a scaffold protein by binding major capsid protein in the cytoplasm, inducing the nuclear localization of both proteins. Multimerizes in the nucleus such as major capsid protein forms the icosahedral T=16 capsid. Autocatalytic cleavage releases the assembly protein, and subsequently abolishes interaction with major capsid protein. Cleavages products are evicted from the capsid before or during DNA packaging. Protease that plays an essential role in virion assembly within the nucleus. Catalyzes the cleavage of the assembly protein after formation of the spherical procapsid. By that cleavage, the capsid matures and gains its icosahedral shape. The cleavage sites seem to include -Ala-Ser-, -Ala-Ala-, as well as Ala-Thr bonds. Assemblin and cleavages products are evicted from the capsid before or during DNA packaging. Its function is as follows. Plays a major role in capsid assembly. Acts as a scaffold protein by binding major capsid protein. Multimerizes in the nucleus such as major capsid protein forms the icosahedral T=16 capsid. Cleaved by assemblin after capsid completion. The cleavages products are evicted from the capsid before or during DNA packaging. This Human herpesvirus 7 (strain JI) (HHV-7) protein is Capsid scaffolding protein (U53).